We begin with the raw amino-acid sequence, 154 residues long: Calmodulin-like protein 6 (154 aa).

EF-hand domains lie at 1 to 36 (MDST…LGII), 37 to 72 (IPED…IMVE), 77 to 112 (VGEE…LGLK), and 115 to 150 (KTLE…GRFF). Positions 14, 16, 18, 20, 25, 50, 52, 54, 56, 61, 90, 92, 94, 101, 128, 130, 132, 134, and 139 each coordinate Ca(2+).

It belongs to the calmodulin family.

Its function is as follows. Potential calcium sensor. The polypeptide is Calmodulin-like protein 6 (CML6) (Arabidopsis thaliana (Mouse-ear cress)).